A 1072-amino-acid chain; its full sequence is MAAALLLYLPLLPGLAGAFNLDAENVIGRRGEPGSLFGFSLAMHRQLQPQEKRLLLVGAPREKAFPSQQANRTGGLYSCDITSSDTRCTRVVFDEDTDPKMESKEDQWMGVTVQSQGPGGNVVTCAHRYEKRQYVNTVQETRDIIGRCYVLSQDLTIKDDMDNGVWSFCDGRLRGHEKFGSCQQGVAATFTRDYHYIVFGAPGTYNWKGVVRAEQKNQTFYDLGIFDDGPYEVGDESRQDKNLVPVPANSYLGFSLDSGKGIVSQDEMTFVSGAPRANHSGAVVLLKKEKNQRALSLEHMFEGEGLASSFGYDVAVVDLNSDGWQDIVVGAPQYFDRSGDIGGAVYIYINQRGKWEGIKPIRLNGTADSMFGLAVENVGDINQDGYPDIAVGAPYDGFGKVYIYHGSKNGINTEPAQILDGEKTGTNFFGYSIAGNMDLDKNSYPDIAVGSLSDSVSVFRSRPVISITKSITVQPDKLDLKKKNPEDPSEIWMDVKACFQYTANPRNLNPRIKINYTFEAENERRQLGLPSRVRFKDYLSDQFTASTTLIGQNSKRCVTAKLVLQEKIKDKLRPIPIAVSVNIAGLESGSSSTRKERALPDLIPILNSNESETKITKVEFLKEGCGEDNECHSNLKLQYRFCTREGNEDRFTYLPIENGIPVLVLKDQKDIALEITVTNNPSDARNPQKDGEDAYEAKLIATFPDSLTYSAFREMRGYPEKQLTCGANQNGSQAECELGNPFKRNSNVTFYLILSTTKVNVDTTDLDINLKLETTSTQVNSTAITASAKVVLELLLSLTGVAKPSQVYFGGNIVGESAMKSEDNIGNLIEYEFRVTNLGRPLKTFGTASLDIQWPKEISNGKWLLYLMKIESKGLEKVSCQPQNEINVLHVAESHNSRRKREIAEKQLTDSKTFSLFSERKYKTLDCKVNAQCVDIRCPLKGFDSKASILLRSRLWNSTFLEEFSKMNYLDILVRASISVPAAAKNVKLTNEAAQVRVTVFPAKPVALYTGVPWWIIAVAIFAGVLMLALLVFLLWKCGFFKRSKKDHYDATYHKAEIHAQPSDKERLTSDA.

An N-terminal signal peptide occupies residues 1 to 18 (MAAALLLYLPLLPGLAGA). Over 19 to 1010 (FNLDAENVIG…FPAKPVALYT (992 aa)) the chain is Extracellular. 7 FG-GAP repeats span residues 23 to 88 (AENV…DTRC), 94 to 160 (DEDT…IKDD), 170 to 223 (DGRL…FYDL), 238 to 295 (RQDK…QRAL), 296 to 357 (SLEH…KWEG), 358 to 413 (IKPI…GINT), and 414 to 476 (EPAQ…VQPD). An N-linked (GlcNAc...) asparagine glycan is attached at N71. 3 cysteine pairs are disulfide-bonded: C79–C88, C125–C148, and C169–C182. N-linked (GlcNAc...) asparagine glycans are attached at residues N217 and N278. Ca(2+)-binding residues include D318, N320, D322, and D326. N-linked (GlcNAc...) asparagine glycosylation occurs at N364. D380, N382, D384, Y386, D388, D438, D440, N442, Y444, and D446 together coordinate Ca(2+). C498 and C557 are joined by a disulfide. N-linked (GlcNAc...) asparagine glycosylation is found at N515 and N609. 2 disulfide bridges follow: C625–C631 and C725–C736. 3 N-linked (GlcNAc...) asparagine glycosylation sites follow: N730, N747, and N780. 2 disulfide bridges follow: C880–C927 and C933–C938. N-linked (GlcNAc...) asparagine glycosylation is present at N957. The helical transmembrane segment at 1011–1036 (GVPWWIIAVAIFAGVLMLALLVFLLW) threads the bilayer. Residues 1037–1072 (KCGFFKRSKKDHYDATYHKAEIHAQPSDKERLTSDA) are Cytoplasmic-facing. C1038 carries the S-palmitoyl cysteine; by DHHC3 lipid modification. The short motif at 1039 to 1043 (GFFKR) is the GFFKR motif element. Phosphoserine; by CaMK2 is present on S1070.

Belongs to the integrin alpha chain family. As to quaternary structure, heterodimer of an alpha and a beta subunit. The alpha subunit is composed of a heavy and a light chain linked by a disulfide bond. Alpha-6 associates with either beta-1 (ITGB1) or beta-4 (ITGB4) to form ITGA6:ITGB1 and ITGA6:ITGB4, respectively. Phosphorylated in vivo.

The protein localises to the cell membrane. Integrin alpha-6/beta-1 (ITGA6:ITGB1) is a receptor for laminin on platelets. Integrin alpha-6/beta-1 (ITGA6:ITGB1) is present in oocytes and is involved in sperm-egg fusion. Integrin alpha-6/beta-4 (ITGA6:ITGB4) is a receptor for laminin in epithelial cells and it plays a critical structural role in the hemidesmosome. The polypeptide is Integrin alpha-6 (ITGA6) (Gallus gallus (Chicken)).